A 284-amino-acid polypeptide reads, in one-letter code: 4-diphosphocytidyl-2-C-methyl-D-erythritol kinase (284 aa).

Residue K14 is part of the active site. 98-108 (PMGGGLGGGSS) lines the ATP pocket. D140 is a catalytic residue.

The protein belongs to the GHMP kinase family. IspE subfamily.

It carries out the reaction 4-CDP-2-C-methyl-D-erythritol + ATP = 4-CDP-2-C-methyl-D-erythritol 2-phosphate + ADP + H(+). It participates in isoprenoid biosynthesis; isopentenyl diphosphate biosynthesis via DXP pathway; isopentenyl diphosphate from 1-deoxy-D-xylulose 5-phosphate: step 3/6. Functionally, catalyzes the phosphorylation of the position 2 hydroxy group of 4-diphosphocytidyl-2C-methyl-D-erythritol. This is 4-diphosphocytidyl-2-C-methyl-D-erythritol kinase from Shewanella sp. (strain ANA-3).